The sequence spans 479 residues: Altronate oxidoreductase (479 aa).

Residue 18–29 (IIQFGEGNFLRA) participates in NAD(+) binding.

It belongs to the mannitol dehydrogenase family. UxaB subfamily.

The catalysed reaction is D-altronate + NAD(+) = keto-D-tagaturonate + NADH + H(+). It functions in the pathway carbohydrate metabolism; pentose and glucuronate interconversion. In Phocaeicola vulgatus (strain ATCC 8482 / DSM 1447 / JCM 5826 / CCUG 4940 / NBRC 14291 / NCTC 11154) (Bacteroides vulgatus), this protein is Altronate oxidoreductase.